A 611-amino-acid polypeptide reads, in one-letter code: Dihydroxy-acid dehydratase (611 aa).

A Mg(2+)-binding site is contributed by D81. C122 provides a ligand contact to [2Fe-2S] cluster. The Mg(2+) site is built by D123 and K124. N6-carboxylysine is present on K124. [2Fe-2S] cluster is bound at residue C195. Residue E491 coordinates Mg(2+). S517 functions as the Proton acceptor in the catalytic mechanism.

The protein belongs to the IlvD/Edd family. In terms of assembly, homodimer. [2Fe-2S] cluster is required as a cofactor. Mg(2+) serves as cofactor.

The enzyme catalyses (2R)-2,3-dihydroxy-3-methylbutanoate = 3-methyl-2-oxobutanoate + H2O. It carries out the reaction (2R,3R)-2,3-dihydroxy-3-methylpentanoate = (S)-3-methyl-2-oxopentanoate + H2O. It functions in the pathway amino-acid biosynthesis; L-isoleucine biosynthesis; L-isoleucine from 2-oxobutanoate: step 3/4. It participates in amino-acid biosynthesis; L-valine biosynthesis; L-valine from pyruvate: step 3/4. Its function is as follows. Functions in the biosynthesis of branched-chain amino acids. Catalyzes the dehydration of (2R,3R)-2,3-dihydroxy-3-methylpentanoate (2,3-dihydroxy-3-methylvalerate) into 2-oxo-3-methylpentanoate (2-oxo-3-methylvalerate) and of (2R)-2,3-dihydroxy-3-methylbutanoate (2,3-dihydroxyisovalerate) into 2-oxo-3-methylbutanoate (2-oxoisovalerate), the penultimate precursor to L-isoleucine and L-valine, respectively. In Brucella suis (strain ATCC 23445 / NCTC 10510), this protein is Dihydroxy-acid dehydratase.